The sequence spans 388 residues: Succinyl-diaminopimelate desuccinylase (388 aa).

His-71 provides a ligand contact to Zn(2+). Asp-73 is an active-site residue. Residue Asp-104 participates in Zn(2+) binding. Glu-143 serves as the catalytic Proton acceptor. Zn(2+)-binding residues include Glu-144, Glu-172, and His-361.

It belongs to the peptidase M20A family. DapE subfamily. As to quaternary structure, homodimer. Zn(2+) serves as cofactor. It depends on Co(2+) as a cofactor.

It catalyses the reaction N-succinyl-(2S,6S)-2,6-diaminopimelate + H2O = (2S,6S)-2,6-diaminopimelate + succinate. It functions in the pathway amino-acid biosynthesis; L-lysine biosynthesis via DAP pathway; LL-2,6-diaminopimelate from (S)-tetrahydrodipicolinate (succinylase route): step 3/3. In terms of biological role, catalyzes the hydrolysis of N-succinyl-L,L-diaminopimelic acid (SDAP), forming succinate and LL-2,6-diaminopimelate (DAP), an intermediate involved in the bacterial biosynthesis of lysine and meso-diaminopimelic acid, an essential component of bacterial cell walls. The sequence is that of Succinyl-diaminopimelate desuccinylase from Bradyrhizobium diazoefficiens (strain JCM 10833 / BCRC 13528 / IAM 13628 / NBRC 14792 / USDA 110).